A 472-amino-acid chain; its full sequence is ATP synthase subunit beta (472 aa).

ATP is bound at residue 149 to 156 (GGAGVGKT).

This sequence belongs to the ATPase alpha/beta chains family. In terms of assembly, F-type ATPases have 2 components, CF(1) - the catalytic core - and CF(0) - the membrane proton channel. CF(1) has five subunits: alpha(3), beta(3), gamma(1), delta(1), epsilon(1). CF(0) has three main subunits: a(1), b(2) and c(9-12). The alpha and beta chains form an alternating ring which encloses part of the gamma chain. CF(1) is attached to CF(0) by a central stalk formed by the gamma and epsilon chains, while a peripheral stalk is formed by the delta and b chains.

The protein localises to the cell inner membrane. It catalyses the reaction ATP + H2O + 4 H(+)(in) = ADP + phosphate + 5 H(+)(out). Functionally, produces ATP from ADP in the presence of a proton gradient across the membrane. The catalytic sites are hosted primarily by the beta subunits. This is ATP synthase subunit beta from Pelagibacter ubique (strain HTCC1062).